The primary structure comprises 113 residues: Pro-FMRFamide-related neuropeptide FF (113 aa).

Residues 1–20 (MDSRQAAALLVLLLLIDGGC) form the signal peptide. The propeptide occupies 21 to 65 (AEGPGGQQEDQLSAEEDSEPLPPQDAQTSGSLLHYLLQAMERPGR). The interval 22 to 48 (EGPGGQQEDQLSAEEDSEPLPPQDAQT) is disordered. A Phenylalanine amide modification is found at F76. A propeptide spanning residues 79–92 (NTQGSWRNEWLSPR) is cleaved from the precursor. Position 110 is a phenylalanine amide (F110).

The protein belongs to the FARP (FMRFamide related peptide) family.

The protein resides in the secreted. Morphine modulating peptides. Have wide-ranging physiologic effects, including the modulation of morphine-induced analgesia, elevation of arterial blood pressure, and increased somatostatin secretion from the pancreas. Neuropeptide FF potentiates and sensitizes ASIC1 and ASIC3 channels. The protein is Pro-FMRFamide-related neuropeptide FF of Homo sapiens (Human).